A 487-amino-acid chain; its full sequence is UDP-glucose flavonoid 3-O-glucosyltransferase 7 (487 aa).

Residue H23 is the Proton acceptor of the active site. H23 is a binding site for an anthocyanidin. D121 functions as the Charge relay in the catalytic mechanism. UDP-alpha-D-glucose contacts are provided by A345, Q347, H362, W365, N366, S367, and E370. An anthocyanidin is bound at residue G385. E386 and Q387 together coordinate UDP-alpha-D-glucose.

It belongs to the UDP-glycosyltransferase family. Strongly expressed in achenes and receptacles.

It carries out the reaction a flavonol + UDP-alpha-D-glucose = a flavonol 3-O-beta-D-glucoside + UDP + H(+). Its function is as follows. Broad spectrum multifunctional glucosyltransferase. Catalyzes the formation of flavonol 3-O- and 4'-O-glucosides during fruit ripening. Accepted substrates include several flavonoids, hydroxycoumarins and beta-naphthols. Uses UDP-Glc as a sugar donor, but not UDP-Gal or UDP-GlcUA. May also be involved in detoxification of xenobiotics. The protein is UDP-glucose flavonoid 3-O-glucosyltransferase 7 of Fragaria ananassa (Strawberry).